The following is a 423-amino-acid chain: Tyrosine--tRNA ligase (423 aa).

Tyr35 contacts L-tyrosine. The 'HIGH' region motif lies at 40–49 (PTAASLHVGH). Positions 170 and 174 each coordinate L-tyrosine. The 'KMSKS' region motif lies at 231-235 (KFGKS). Lys234 lines the ATP pocket. Residues 353-419 (GPLVDLLVEV…GKKNLAAVEV (67 aa)) enclose the S4 RNA-binding domain.

The protein belongs to the class-I aminoacyl-tRNA synthetase family. TyrS type 1 subfamily. In terms of assembly, homodimer.

It is found in the cytoplasm. The enzyme catalyses tRNA(Tyr) + L-tyrosine + ATP = L-tyrosyl-tRNA(Tyr) + AMP + diphosphate + H(+). Its function is as follows. Catalyzes the attachment of tyrosine to tRNA(Tyr) in a two-step reaction: tyrosine is first activated by ATP to form Tyr-AMP and then transferred to the acceptor end of tRNA(Tyr). The polypeptide is Tyrosine--tRNA ligase (Streptomyces griseus subsp. griseus (strain JCM 4626 / CBS 651.72 / NBRC 13350 / KCC S-0626 / ISP 5235)).